Here is a 260-residue protein sequence, read N- to C-terminus: Segregation and condensation protein A (260 aa).

This sequence belongs to the ScpA family. In terms of assembly, component of a cohesin-like complex composed of ScpA, ScpB and the Smc homodimer, in which ScpA and ScpB bind to the head domain of Smc. The presence of the three proteins is required for the association of the complex with DNA.

It is found in the cytoplasm. Functionally, participates in chromosomal partition during cell division. May act via the formation of a condensin-like complex containing Smc and ScpB that pull DNA away from mid-cell into both cell halves. The chain is Segregation and condensation protein A from Halalkalibacterium halodurans (strain ATCC BAA-125 / DSM 18197 / FERM 7344 / JCM 9153 / C-125) (Bacillus halodurans).